Here is a 280-residue protein sequence, read N- to C-terminus: Large ribosomal subunit protein uL2 (280 aa).

Disordered stretches follow at residues 1–59 and 223–280; these read MAIR…GGHK and GVVM…NKKR. Basic residues-rich tracts occupy residues 45-59 and 269-280; these read VHGH…GGHK and VRRRRSNKNKKR.

This sequence belongs to the universal ribosomal protein uL2 family. Part of the 50S ribosomal subunit. Forms a bridge to the 30S subunit in the 70S ribosome.

One of the primary rRNA binding proteins. Required for association of the 30S and 50S subunits to form the 70S ribosome, for tRNA binding and peptide bond formation. It has been suggested to have peptidyltransferase activity; this is somewhat controversial. Makes several contacts with the 16S rRNA in the 70S ribosome. In Corynebacterium jeikeium (strain K411), this protein is Large ribosomal subunit protein uL2.